The sequence spans 137 residues: Nucleoside diphosphate kinase (137 aa).

ATP contacts are provided by K9, F57, R85, T91, R102, and N112. H115 acts as the Pros-phosphohistidine intermediate in catalysis.

It belongs to the NDK family. Homotetramer. It depends on Mg(2+) as a cofactor.

The protein resides in the cytoplasm. It carries out the reaction a 2'-deoxyribonucleoside 5'-diphosphate + ATP = a 2'-deoxyribonucleoside 5'-triphosphate + ADP. The catalysed reaction is a ribonucleoside 5'-diphosphate + ATP = a ribonucleoside 5'-triphosphate + ADP. Functionally, major role in the synthesis of nucleoside triphosphates other than ATP. The ATP gamma phosphate is transferred to the NDP beta phosphate via a ping-pong mechanism, using a phosphorylated active-site intermediate. The sequence is that of Nucleoside diphosphate kinase from Campylobacter jejuni subsp. doylei (strain ATCC BAA-1458 / RM4099 / 269.97).